The chain runs to 211 residues: Uracil phosphoribosyltransferase (211 aa).

5-phospho-alpha-D-ribose 1-diphosphate is bound by residues arginine 79, arginine 104, and 131–139; that span reads DPMLATGGS. Uracil contacts are provided by residues isoleucine 196 and 201-203; that span reads GDA. Aspartate 202 provides a ligand contact to 5-phospho-alpha-D-ribose 1-diphosphate.

The protein belongs to the UPRTase family. Mg(2+) is required as a cofactor.

The enzyme catalyses UMP + diphosphate = 5-phospho-alpha-D-ribose 1-diphosphate + uracil. Its pathway is pyrimidine metabolism; UMP biosynthesis via salvage pathway; UMP from uracil: step 1/1. Its activity is regulated as follows. Allosterically activated by GTP. Catalyzes the conversion of uracil and 5-phospho-alpha-D-ribose 1-diphosphate (PRPP) to UMP and diphosphate. This Lactococcus lactis subsp. cremoris (strain MG1363) protein is Uracil phosphoribosyltransferase.